A 1214-amino-acid chain; its full sequence is Reverse gyrase (1214 aa).

The RG N-terminal-type zinc finger occupies 1–37; sequence MKAIYRDMCPNCRGAITDERLAAKNPCDACLDEPISM. 4 residues coordinate Zn(2+): C9, C12, C27, and C30. ATP contacts are provided by residues Q89 and 106-113; that span reads APTGMGKS. The region spanning 93–252 is the Helicase ATP-binding domain; it reads VKRIIKGKSF…WEIIKLKKQL (160 aa). A DEAD box motif is present at residues 213-216; that stretch reads DDVD. The topoisomerase I stretch occupies residues 635-1214; it reads DLVKSALMIV…YEEILRYVKS (580 aa). Residues 639 to 802 form the Toprim domain; sequence SALMIVESPN…VIKRIEFHEV (164 aa). E645 is a binding site for Mg(2+). Residues 719 to 748 form an RG C-terminal-type zinc finger; it reads IKRCRDCGHQFVDWEEKGVCPRCGSRNVYD. Residues C722, C725, C738, and C741 each contribute to the Zn(2+) site. Mg(2+) is bound at residue D771. One can recognise a Topo IA-type catalytic domain in the interval 818-1212; it reads NEDRVNAQLV…ELYEEILRYV (395 aa). Y955 serves as the catalytic O-(5'-phospho-DNA)-tyrosine intermediate.

This sequence in the N-terminal section; belongs to the DEAD box helicase family. DDVD subfamily. It in the C-terminal section; belongs to the type IA topoisomerase family. As to quaternary structure, monomer. It depends on Zn(2+) as a cofactor. Requires Mg(2+) as cofactor.

The protein resides in the cytoplasm. It carries out the reaction ATP + H2O = ADP + phosphate + H(+). In terms of biological role, modifies the topological state of DNA by introducing positive supercoils in an ATP-dependent process. Increases the linking number in steps of +1. Binds to single-stranded DNA, transiently cleaves and then rejoins the ends, introducing a positive supercoil in the process. The scissile phosphodiester is attacked by the catalytic tyrosine of the enzyme, resulting in the formation of a DNA-(5'-phosphotyrosyl)-enzyme intermediate. Probably involved in rewinding DNA strands in regions of the chromosome that have opened up to allow replication, transcription, DNA repair and/or for DNA protection. The polypeptide is Reverse gyrase (Pyrococcus furiosus (strain ATCC 43587 / DSM 3638 / JCM 8422 / Vc1)).